A 783-amino-acid chain; its full sequence is RNA exonuclease 5 (783 aa).

In terms of domain architecture, Exonuclease spans 230 to 378 (LFGLDCEMCL…EDARTTLELA (149 aa)). 2 RRM domains span residues 503–577 (STVY…RPVT) and 598–677 (GTIY…RHLH).

The sequence is that of RNA exonuclease 5 (REXO5) from Bos taurus (Bovine).